Here is a 181-residue protein sequence, read N- to C-terminus: Probable nicotinate-nucleotide adenylyltransferase (181 aa).

Belongs to the NadD family.

It catalyses the reaction nicotinate beta-D-ribonucleotide + ATP + H(+) = deamido-NAD(+) + diphosphate. Its pathway is cofactor biosynthesis; NAD(+) biosynthesis; deamido-NAD(+) from nicotinate D-ribonucleotide: step 1/1. Functionally, catalyzes the reversible adenylation of nicotinate mononucleotide (NaMN) to nicotinic acid adenine dinucleotide (NaAD). In Campylobacter jejuni subsp. jejuni serotype O:6 (strain 81116 / NCTC 11828), this protein is Probable nicotinate-nucleotide adenylyltransferase.